The sequence spans 240 residues: Triosephosphate isomerase (240 aa).

9 to 11 (NWK) contributes to the substrate binding site. The Electrophile role is filled by histidine 94. Catalysis depends on glutamate 163, which acts as the Proton acceptor. Substrate contacts are provided by residues glycine 169, serine 202, and 223 to 224 (GG).

It belongs to the triosephosphate isomerase family. In terms of assembly, homodimer.

Its subcellular location is the cytoplasm. It catalyses the reaction D-glyceraldehyde 3-phosphate = dihydroxyacetone phosphate. The protein operates within carbohydrate biosynthesis; gluconeogenesis. It participates in carbohydrate degradation; glycolysis; D-glyceraldehyde 3-phosphate from glycerone phosphate: step 1/1. Involved in the gluconeogenesis. Catalyzes stereospecifically the conversion of dihydroxyacetone phosphate (DHAP) to D-glyceraldehyde-3-phosphate (G3P). This is Triosephosphate isomerase from Gloeobacter violaceus (strain ATCC 29082 / PCC 7421).